The following is a 394-amino-acid chain: Glycogen synthase kinase 1 (394 aa).

In terms of domain architecture, Protein kinase spans 35-318 (YTQCKIVGNG…AIDAMVHPFF (284 aa)). ATP-binding positions include 41-49 (VGNGSFGVV) and Lys-64.

It belongs to the protein kinase superfamily. CMGC Ser/Thr protein kinase family. GSK-3 subfamily.

It localises to the cytoplasm. The enzyme catalyses L-seryl-[protein] + ATP = O-phospho-L-seryl-[protein] + ADP + H(+). In terms of biological role, protein kinase that acts downstream of the MPS1 MAPK cascade as a highly conservative signal modulator that dictates growth, conidiation and pathogenicity. Phosphorylates HAT1 at 'Ser-8' to block its translocation from the nucleus to the cytoplasm where HAT1 positively regulates appressorium development and pathogenicity. The polypeptide is Glycogen synthase kinase 1 (Pyricularia oryzae (Rice blast fungus)).